The chain runs to 81 residues: Large ribosomal subunit protein bL31B (81 aa).

It belongs to the bacterial ribosomal protein bL31 family. Type B subfamily. As to quaternary structure, part of the 50S ribosomal subunit.

The polypeptide is Large ribosomal subunit protein bL31B (Bdellovibrio bacteriovorus (strain ATCC 15356 / DSM 50701 / NCIMB 9529 / HD100)).